Here is a 360-residue protein sequence, read N- to C-terminus: Peptide chain release factor 1 (360 aa).

An N5-methylglutamine modification is found at Gln237.

This sequence belongs to the prokaryotic/mitochondrial release factor family. Post-translationally, methylated by PrmC. Methylation increases the termination efficiency of RF1.

The protein resides in the cytoplasm. In terms of biological role, peptide chain release factor 1 directs the termination of translation in response to the peptide chain termination codons UAG and UAA. This chain is Peptide chain release factor 1, found in Pseudomonas fluorescens (strain SBW25).